The sequence spans 91 residues: Signal recognition particle 19 kDa protein (91 aa).

It belongs to the SRP19 family. As to quaternary structure, part of the signal recognition particle protein translocation system, which is composed of SRP and FtsY. Archaeal SRP consists of a 7S RNA molecule of 300 nucleotides and two protein subunits: SRP54 and SRP19.

The protein localises to the cytoplasm. Involved in targeting and insertion of nascent membrane proteins into the cytoplasmic membrane. Binds directly to 7S RNA and mediates binding of the 54 kDa subunit of the SRP. The polypeptide is Signal recognition particle 19 kDa protein (Methanothermobacter thermautotrophicus (strain ATCC 29096 / DSM 1053 / JCM 10044 / NBRC 100330 / Delta H) (Methanobacterium thermoautotrophicum)).